A 485-amino-acid chain; its full sequence is Isocitrate dehydrogenase [NADP], chloroplastic/mitochondrial (485 aa).

The N-terminal 65 residues, 1 to 65, are a transit peptide targeting the chloroplast and mitochondrion; sequence MLNKLTHGVF…VQFHRASAVR (65 aa). NADP(+) contacts are provided by residues 147–149 and R154; that span reads TIT. Substrate is bound at residue T149. Substrate is bound by residues 166–172, R181, and R204; that span reads SPNGTIR. D323 serves as a coordination point for Mn(2+). K331 is an NADP(+) binding site. D346 contacts Mn(2+). Residues 381–386 and N399 contribute to the NADP(+) site; that span reads GTVTRH.

This sequence belongs to the isocitrate and isopropylmalate dehydrogenases family. It depends on Mg(2+) as a cofactor. Mn(2+) is required as a cofactor.

The protein resides in the plastid. It localises to the chloroplast. The protein localises to the mitochondrion. The catalysed reaction is D-threo-isocitrate + NADP(+) = 2-oxoglutarate + CO2 + NADPH. In terms of biological role, may be involved in response to oxidative stresses. The chain is Isocitrate dehydrogenase [NADP], chloroplastic/mitochondrial from Arabidopsis thaliana (Mouse-ear cress).